The primary structure comprises 218 residues: Protein GrpE (218 aa).

The segment at 1-78 (MSEFNKDDYL…DSADTLTPLG (78 aa)) is disordered. The segment covering 14–58 (PDPSDAEAAAQASSGADASAESGSAQDSAAQAPSNEGADAAPAAA) has biased composition (low complexity).

This sequence belongs to the GrpE family. Homodimer.

The protein localises to the cytoplasm. Participates actively in the response to hyperosmotic and heat shock by preventing the aggregation of stress-denatured proteins, in association with DnaK and GrpE. It is the nucleotide exchange factor for DnaK and may function as a thermosensor. Unfolded proteins bind initially to DnaJ; upon interaction with the DnaJ-bound protein, DnaK hydrolyzes its bound ATP, resulting in the formation of a stable complex. GrpE releases ADP from DnaK; ATP binding to DnaK triggers the release of the substrate protein, thus completing the reaction cycle. Several rounds of ATP-dependent interactions between DnaJ, DnaK and GrpE are required for fully efficient folding. The chain is Protein GrpE from Bifidobacterium longum (strain NCC 2705).